The chain runs to 111 residues: MSCPIDSKKLEEICLEAAQPVLKASEYDGDKTAEMNQSVIYAVLNALNKETQSYKWIVSSTLVQKLPEDHPSRGVHAAHAACWNCEKDGMTTIKESGEAIDVVLSIMWISI.

It belongs to the dynein light chain Tctex-type family.

It is found in the cytoplasm. The protein localises to the cytoskeleton. Functionally, acts as a non-catalytic accessory component of a dynein complex. The polypeptide is Dynein light chain Tctex-type (dlc1) (Schizosaccharomyces pombe (strain 972 / ATCC 24843) (Fission yeast)).